Reading from the N-terminus, the 179-residue chain is Ribosome maturation factor RimP (179 aa).

The protein belongs to the RimP family.

The protein resides in the cytoplasm. Its function is as follows. Required for maturation of 30S ribosomal subunits. In Prosthecochloris aestuarii (strain DSM 271 / SK 413), this protein is Ribosome maturation factor RimP.